We begin with the raw amino-acid sequence, 837 residues long: V-type proton ATPase 116 kDa subunit a 1 (837 aa).

Residues Met1–Glu388 are Cytoplasmic-facing. Residues Thr250 and Thr360 each carry the phosphothreonine modification. Tyr364 carries the phosphotyrosine modification. Residues Ile389–Phe407 traverse the membrane as a helical segment. The Vacuolar segment spans residues Gly408–Asp409. Residues Phe410–Arg426 traverse the membrane as a helical segment. Topologically, residues Glu427 to Ser441 are cytoplasmic. A helical transmembrane segment spans residues Thr442 to Ser471. Over Leu472 to Ser534 the chain is Vacuolar. An N-linked (GalNAc...) asparagine glycan is attached at Asn488. Residues Phe535–Leu554 traverse the membrane as a helical segment. The Cytoplasmic segment spans residues Ser555–Phe572. A helical membrane pass occupies residues Ile573–Lys593. Topologically, residues Trp594–Phe638 are vacuolar. Residues Leu639–Leu658 traverse the membrane as a helical segment. Topologically, residues Arg659–Thr724 are cytoplasmic. A helical transmembrane segment spans residues Ile725–Ala749. The Vacuolar segment spans residues Gln750–Ala770. The helical transmembrane segment at Gly771 to Glu809 threads the bilayer. The Cytoplasmic portion of the chain corresponds to Phe810–Glu837.

This sequence belongs to the V-ATPase 116 kDa subunit family. As to quaternary structure, V-ATPase is a heteromultimeric enzyme made up of two complexes: the ATP-hydrolytic V1 complex and the proton translocation V0 complex. The V1 complex consists of three catalytic AB heterodimers that form a heterohexamer, three peripheral stalks each consisting of EG heterodimers, one central rotor including subunits D and F, and the regulatory subunits C and H. The proton translocation complex V0 consists of the proton transport subunit a, a ring of proteolipid subunits c9c'', rotary subunit d, subunits e and f, and the accessory subunits ATP6AP1/Ac45 and ATP6AP2/PRR. Interacts with SPAAR.

Its subcellular location is the cytoplasmic vesicle. The protein localises to the clathrin-coated vesicle membrane. It localises to the secretory vesicle. It is found in the synaptic vesicle membrane. The protein resides in the melanosome. In terms of biological role, subunit of the V0 complex of vacuolar(H+)-ATPase (V-ATPase), a multisubunit enzyme composed of a peripheral complex (V1) that hydrolyzes ATP and a membrane integral complex (V0) that transports protons across cellular membranes. V-ATPase is responsible for the acidification of various organelles, such as lysosomes, endosomes, the trans-Golgi network, and secretory granules, including synaptic vesicles. In certain cell types, can be exported to the plasma membrane, where it is involved in the acidification of the extracellular environment. Required for assembly and activity of the vacuolar ATPase. Through its action on compartment acidification, plays an essential role in neuronal development in terms of integrity and connectivity of neurons. The sequence is that of V-type proton ATPase 116 kDa subunit a 1 (ATP6V0A1) from Homo sapiens (Human).